A 178-amino-acid polypeptide reads, in one-letter code: Ribosome maturation factor RimM (178 aa).

The PRC barrel domain occupies 93–170 (EGSYYYHELR…ALTADAPAGL (78 aa)).

The protein belongs to the RimM family. As to quaternary structure, binds ribosomal protein uS19.

It is found in the cytoplasm. In terms of biological role, an accessory protein needed during the final step in the assembly of 30S ribosomal subunit, possibly for assembly of the head region. Essential for efficient processing of 16S rRNA. May be needed both before and after RbfA during the maturation of 16S rRNA. It has affinity for free ribosomal 30S subunits but not for 70S ribosomes. The sequence is that of Ribosome maturation factor RimM from Deinococcus geothermalis (strain DSM 11300 / CIP 105573 / AG-3a).